The primary structure comprises 443 residues: ATP-dependent protease ATPase subunit HslU (443 aa).

ATP contacts are provided by residues Ile-18, 60-65 (GVGKTE), Asp-256, Glu-321, and Arg-393.

This sequence belongs to the ClpX chaperone family. HslU subfamily. As to quaternary structure, a double ring-shaped homohexamer of HslV is capped on each side by a ring-shaped HslU homohexamer. The assembly of the HslU/HslV complex is dependent on binding of ATP.

It localises to the cytoplasm. ATPase subunit of a proteasome-like degradation complex; this subunit has chaperone activity. The binding of ATP and its subsequent hydrolysis by HslU are essential for unfolding of protein substrates subsequently hydrolyzed by HslV. HslU recognizes the N-terminal part of its protein substrates and unfolds these before they are guided to HslV for hydrolysis. This is ATP-dependent protease ATPase subunit HslU from Salmonella typhi.